The chain runs to 143 residues: Chorion class A protein Ld5 (143 aa).

An N-terminal signal peptide occupies residues Met-1–Ser-21.

The protein belongs to the chorion protein family.

In terms of biological role, this protein is one of many from the eggshell of the gypsy moth. The polypeptide is Chorion class A protein Ld5 (Lymantria dispar (Gypsy moth)).